A 441-amino-acid polypeptide reads, in one-letter code: Dihydroorotase (441 aa).

Zn(2+) contacts are provided by H77 and H79. Residues 79–81 (HFR) and N111 each bind substrate. Zn(2+) contacts are provided by D167, H194, and H248. Residue N294 participates in substrate binding. D321 contributes to the Zn(2+) binding site. The active site involves D321. Substrate is bound by residues H325 and 339 to 340 (FG).

The protein belongs to the metallo-dependent hydrolases superfamily. DHOase family. Class I DHOase subfamily. Requires Zn(2+) as cofactor.

The catalysed reaction is (S)-dihydroorotate + H2O = N-carbamoyl-L-aspartate + H(+). The protein operates within pyrimidine metabolism; UMP biosynthesis via de novo pathway; (S)-dihydroorotate from bicarbonate: step 3/3. Functionally, catalyzes the reversible cyclization of carbamoyl aspartate to dihydroorotate. The polypeptide is Dihydroorotase (Wolbachia sp. subsp. Drosophila simulans (strain wRi)).